We begin with the raw amino-acid sequence, 372 residues long: 4-hydroxy-3-methylbut-2-en-1-yl diphosphate synthase (flavodoxin) (372 aa).

[4Fe-4S] cluster contacts are provided by C270, C273, C305, and E312.

Belongs to the IspG family. [4Fe-4S] cluster serves as cofactor.

The enzyme catalyses (2E)-4-hydroxy-3-methylbut-2-enyl diphosphate + oxidized [flavodoxin] + H2O + 2 H(+) = 2-C-methyl-D-erythritol 2,4-cyclic diphosphate + reduced [flavodoxin]. It functions in the pathway isoprenoid biosynthesis; isopentenyl diphosphate biosynthesis via DXP pathway; isopentenyl diphosphate from 1-deoxy-D-xylulose 5-phosphate: step 5/6. Converts 2C-methyl-D-erythritol 2,4-cyclodiphosphate (ME-2,4cPP) into 1-hydroxy-2-methyl-2-(E)-butenyl 4-diphosphate. The sequence is that of 4-hydroxy-3-methylbut-2-en-1-yl diphosphate synthase (flavodoxin) from Shewanella amazonensis (strain ATCC BAA-1098 / SB2B).